The following is a 76-amino-acid chain: UPF0248 protein MmarC6_0667 (76 aa).

This sequence belongs to the UPF0248 family.

This Methanococcus maripaludis (strain C6 / ATCC BAA-1332) protein is UPF0248 protein MmarC6_0667.